Consider the following 203-residue polypeptide: Outer-membrane lipoprotein LolB (203 aa).

Residues 1 to 22 (MPVNLNHTLLLCLLVAASLLSG) form the signal peptide. Cysteine 23 carries N-palmitoyl cysteine lipidation. The S-diacylglycerol cysteine moiety is linked to residue cysteine 23.

It belongs to the LolB family. Monomer.

It localises to the cell outer membrane. Functionally, plays a critical role in the incorporation of lipoproteins in the outer membrane after they are released by the LolA protein. This chain is Outer-membrane lipoprotein LolB, found in Shewanella denitrificans (strain OS217 / ATCC BAA-1090 / DSM 15013).